Reading from the N-terminus, the 162-residue chain is NAD(P)H-quinone oxidoreductase subunit N (162 aa).

The protein belongs to the complex I NdhN subunit family. NDH-1 can be composed of about 15 different subunits; different subcomplexes with different compositions have been identified which probably have different functions.

The protein resides in the cellular thylakoid membrane. It carries out the reaction a plastoquinone + NADH + (n+1) H(+)(in) = a plastoquinol + NAD(+) + n H(+)(out). The enzyme catalyses a plastoquinone + NADPH + (n+1) H(+)(in) = a plastoquinol + NADP(+) + n H(+)(out). In terms of biological role, NDH-1 shuttles electrons from an unknown electron donor, via FMN and iron-sulfur (Fe-S) centers, to quinones in the respiratory and/or the photosynthetic chain. The immediate electron acceptor for the enzyme in this species is believed to be plastoquinone. Couples the redox reaction to proton translocation, and thus conserves the redox energy in a proton gradient. Cyanobacterial NDH-1 also plays a role in inorganic carbon-concentration. In Nostoc sp. (strain PCC 7120 / SAG 25.82 / UTEX 2576), this protein is NAD(P)H-quinone oxidoreductase subunit N.